The sequence spans 196 residues: DnaA initiator-associating protein DiaA (196 aa).

In terms of domain architecture, SIS spans 34–196 (LVQSLLNGNK…DNTLFPHQDD (163 aa)).

It belongs to the SIS family. DiaA subfamily. In terms of assembly, homotetramer; dimer of dimers.

In terms of biological role, required for the timely initiation of chromosomal replication via direct interactions with the DnaA initiator protein. The protein is DnaA initiator-associating protein DiaA of Yersinia enterocolitica serotype O:8 / biotype 1B (strain NCTC 13174 / 8081).